The following is an 872-amino-acid chain: Extended synaptotagmin-2-A (872 aa).

The tract at residues Met-1 to Pro-25 is disordered. Over Met-1–Gly-31 the chain is Cytoplasmic. The helical transmembrane segment at Met-32–Phe-52 threads the bilayer. The Lumenal segment spans residues Pro-53–Tyr-55. Residues Val-56–Trp-76 traverse the membrane as a helical segment. Residues Trp-77 to Ser-872 are Cytoplasmic-facing. The region spanning Asp-119–Val-298 is the SMP-LTD domain. C2 domains follow at residues Leu-297–Phe-417 and Asn-442–Asn-588. 9 residues coordinate Ca(2+): Lys-328, Asp-329, Asp-341, Asp-388, Glu-389, Asp-390, Asp-392, Asp-394, and Asp-395. Residues Lys-608–His-617 show a composition bias toward basic and acidic residues. Residues Lys-608–Ile-711 are disordered. Pro residues predominate over residues Pro-632–Pro-652. Residues Asn-664–Gln-681 show a composition bias toward polar residues. Residues Ser-682–Ser-696 show a composition bias toward low complexity. In terms of domain architecture, C2 3 spans Pro-737 to Tyr-859. A required for phosphatidylinositol 4,5-bisphosphate-dependent location at the cell membrane region spans residues Lys-784 to Lys-791.

It belongs to the extended synaptotagmin family. As to quaternary structure, interacts with fgfr1 that has been activated by fgf1 binding. Interacts (via C2 domains) with the AP-2 complex (via an alpha subunit). Identified in a complex with the AP-2 complex and fgfr1.

Its subcellular location is the cell membrane. It localises to the endoplasmic reticulum membrane. Functionally, tethers the endoplasmic reticulum to the cell membrane and promotes the formation of appositions between the endoplasmic reticulum and the cell membrane. Binds glycerophospholipids in a barrel-like domain and may play a role in cellular lipid transport. Plays a role in the rapid internalization of fgfr1 that has been activated by fgf1 binding; this occurs most likely via the AP-2 complex. Required for normal fgf signaling and the activation of downstream signaling cascades via its role in the internalization of activated fgfr1. Required for normal embryonic development via its role in fgf signaling and the downstream regulation of t/xBRA expression. The chain is Extended synaptotagmin-2-A (esyt2-a) from Xenopus laevis (African clawed frog).